We begin with the raw amino-acid sequence, 928 residues long: MYCBP-associated protein (928 aa).

2 disordered regions span residues 1–38 and 164–183; these read MKKA…PVSN and EEPK…APPL. The segment covering 164–177 has biased composition (basic and acidic residues); the sequence is EEPKPKSPKEEKRP. Ser557 is subject to Phosphoserine. Thr558 bears the Phosphothreonine mark. Ser564 bears the Phosphoserine mark. The disordered stretch occupies residues 786–881; it reads IPDEGQKSPP…SSATSQEPID (96 aa). The span at 806 to 865 shows a compositional bias: basic and acidic residues; it reads LGKEDRRGGAQEKKQLSARDKEEKKGSKTPSKEDRLNSKKQKAKDDKKVVKSTSRDRLLS.

Interacts with MYCBP. Expressed in brain, retina, testis, heart and lung. Not detected in liver, kidney or intestine. In brain, highly abundant in CNS neurons of the hippocampus and cerebellum. Strongly expressed in cochlea and vestibular sensory epithelia. In both the organ of Corti and the vestibular organ, expression is restricted to hair cells.

It is found in the cytoplasm. The protein resides in the membrane. In terms of biological role, may play a role in spermatogenesis. May be involved in synaptic processes. The protein is MYCBP-associated protein of Rattus norvegicus (Rat).